The primary structure comprises 458 residues: tRNA-2-methylthio-N(6)-dimethylallyladenosine synthase (458 aa).

Positions 15 to 134 (KKVFIKTYGC…LPDLLEQTKQ (120 aa)) constitute an MTTase N-terminal domain. Positions 24, 60, 97, 175, 179, and 182 each coordinate [4Fe-4S] cluster. The region spanning 161–393 (RKRGVSAFLT…QVLLLEQQNA (233 aa)) is the Radical SAM core domain. Residues 396-457 (RSKIGQTTDV…SNSFVGEIAN (62 aa)) form the TRAM domain.

This sequence belongs to the methylthiotransferase family. MiaB subfamily. Monomer. It depends on [4Fe-4S] cluster as a cofactor.

The protein localises to the cytoplasm. The enzyme catalyses N(6)-dimethylallyladenosine(37) in tRNA + (sulfur carrier)-SH + AH2 + 2 S-adenosyl-L-methionine = 2-methylsulfanyl-N(6)-dimethylallyladenosine(37) in tRNA + (sulfur carrier)-H + 5'-deoxyadenosine + L-methionine + A + S-adenosyl-L-homocysteine + 2 H(+). Its function is as follows. Catalyzes the methylthiolation of N6-(dimethylallyl)adenosine (i(6)A), leading to the formation of 2-methylthio-N6-(dimethylallyl)adenosine (ms(2)i(6)A) at position 37 in tRNAs that read codons beginning with uridine. The chain is tRNA-2-methylthio-N(6)-dimethylallyladenosine synthase from Bartonella quintana (strain Toulouse) (Rochalimaea quintana).